Consider the following 437-residue polypeptide: Trigger factor (437 aa).

A PPIase FKBP-type domain is found at 163-248 (GDIAVINFEG…LNQIKAKVLP (86 aa)).

This sequence belongs to the FKBP-type PPIase family. Tig subfamily.

It localises to the cytoplasm. The catalysed reaction is [protein]-peptidylproline (omega=180) = [protein]-peptidylproline (omega=0). Involved in protein export. Acts as a chaperone by maintaining the newly synthesized protein in an open conformation. Functions as a peptidyl-prolyl cis-trans isomerase. The sequence is that of Trigger factor from Bdellovibrio bacteriovorus (strain ATCC 15356 / DSM 50701 / NCIMB 9529 / HD100).